Consider the following 334-residue polypeptide: MADERTGDSVKTRYDIALMNLNDIKIAVFRDSLSTYVEQKTGLTIQFNWPKSRCLVISTLCKIPFPTKSAAELQEMCSLLLCCPERLQLLGYVSVWGEETRDVCLTKTLVFAGEDEKFYGLDFVNETLYLLAETTERFAVLGLRRYDPVYREKDIRFLTKIDDVLQSLIDAQDNLWKFATIVYKNSGRHYIMKSCLENNDGVFVLFLTRKEDFPSRMEWNFFSDVYESMPYHGQVIGSIGKTLLYPKTMFVMMDLSGAIYGIDTIGTGIGSCVKIADDFESFLRQGIVRGYRRYKFFHRNISTVQEILPLCPHTSLGPTFSNNYNYDLSSEDDE.

Belongs to the herpesviridae US22 family. Post-translationally, isoform 1 is not glycosylated.

Its function is as follows. Isoform 3 can transactivate the human immunodeficiency virus type 1 promoter. This Homo sapiens (Human) protein is Protein U17/U16 (U17/U16).